A 340-amino-acid polypeptide reads, in one-letter code: MGKTIPRFLEQLDLIKSFVGLATGAGALYLLYKAVRTGLKCHPPLCSNSPICIARLAIERERHGRDSGEIRRLLNSLDCKQDEYTRSMILHNITRCVYLLEAEASSCTMDDIDLVADMLDEKDNSVKIQALNALKAFSGIRKFRLKIQEHCIKVLELISTIWDLELHVAGLRLLNNLPLPDYVHPQLRRVMPALMEIIQSDCILAQVQAVRLLSYLAQKNDLLYDILNCQVRPNFLNLFQSSQPGSLLFEVLVFAEHLSEGRNATHYRAVKWHYNEQSLHEALFGDESRLADRLLSLVIHPEEEVQIQACKVIVSLQCPQDLGSRPSSCRPSHSCFKTGK.

The interval 1 to 101 (MGKTIPRFLE…NITRCVYLLE (101 aa)) is interaction with TBC1D15. 3 ARM repeats span residues 100–139 (LEAE…AFSG), 179–218 (LPDY…YLAQ), and 278–318 (SLHE…SLQC). The segment at 321–340 (DLGSRPSSCRPSHSCFKTGK) is disordered. Over residues 324–340 (SRPSSCRPSHSCFKTGK) the composition is skewed to low complexity.

Interacts with TBC1D15, TBC1D21, GK2 and IMMT. Interacts with VDAC2 and VDAC3 in a TBC1D21-dependent manner. Interacts (via ARM domains) with RBBP4. As to expression, testis-specific.

It is found in the nucleus. The protein localises to the mitochondrion outer membrane. Functionally, essential for male fertility and sperm mitochondrial sheath formation. Required for proper mitochondrial elongation and coiling along the flagellum during the formation of the mitochondrial sheath. Facilitates the growth and aggressiveness of neuroblastoma cells. Increases the EZH2 activity and H3K27me3 levels in a RBBP4-dependent manner, and facilitates the enrichment of polycomb repressive complex 2 and H3K27me3 on gene promoters, resulting in transcriptional repression of tumor suppressors affecting the proliferation, invasion, and metastasis of tumor cells. The protein is Armadillo repeat-containing protein 12 (Armc12) of Mus musculus (Mouse).